A 333-amino-acid polypeptide reads, in one-letter code: MLKPMYYEFFFIFPKERELFESFLLDATHLALEESSLENLKAFDDKETIGFISQSNWHYFATHDPLKKDLKENLKEKPPHLKNFVILRSQKDLNNSLIPALEAFCLNLKQNLQSEFDFFYLSRNLASKDWLEAYKQAILPVQCTKFYIHPSWHQKPSHVVTNDCIMIDPALAFGSGHHESTSMCLELLSDIDLKRKNALDVGCGSGILSIALKKQGVSALVACDTDSLAVEETLKNFSLNQIPLLVQDKVIYGSTQKIEGRFDVIVANLVADVIKSLYSEFVRLCNHTLILSGILETHLNSVLQIYYNGFEVLEQRQRNEWVALKLLKKQPIN.

4 residues coordinate S-adenosyl-L-methionine: Thr-181, Gly-202, Asp-224, and Asn-268.

It belongs to the methyltransferase superfamily. PrmA family.

The protein resides in the cytoplasm. The catalysed reaction is L-lysyl-[protein] + 3 S-adenosyl-L-methionine = N(6),N(6),N(6)-trimethyl-L-lysyl-[protein] + 3 S-adenosyl-L-homocysteine + 3 H(+). Functionally, methylates ribosomal protein L11. The chain is Ribosomal protein L11 methyltransferase from Helicobacter pylori (strain ATCC 700392 / 26695) (Campylobacter pylori).